A 93-amino-acid chain; its full sequence is UPF0358 protein lmo1070 (93 aa).

This sequence belongs to the UPF0358 family.

This Listeria monocytogenes serovar 1/2a (strain ATCC BAA-679 / EGD-e) protein is UPF0358 protein lmo1070.